A 986-amino-acid chain; its full sequence is Translation initiation factor IF-2 (986 aa).

The segment covering 49–59 has biased composition (basic and acidic residues); that stretch reads EFAKDNAKGDS. Residues 49–370 are disordered; sequence EFAKDNAKGD…KNRLAKRHEY (322 aa). A compositionally biased stretch (low complexity) spans 60–112; sequence KPASSAQKPAAKPVQQRRPAAPSAPASTSSSAPTPAAPARQASPASAHQQAPT. The span at 135 to 168 shows a compositional bias: basic and acidic residues; it reads GQHDNRENGRDNREGRENGRQSRPNDRRNNDRRN. Over residues 170 to 182 the composition is skewed to low complexity; that stretch reads QGRPNNGQPGQHQ. Composition is skewed to gly residues over residues 254-286 and 296-353; these read GRGGRPGRPGQGQGQGRGFRGGRPGQGGQGGPR and GQGG…GRQG. The span at 357–366 shows a compositional bias: basic residues; sequence SKARKNRLAK. A tr-type G domain is found at 479 to 651; it reads PRPPVVTVMG…VLLTADAELD (173 aa). Residues 488–495 are G1; the sequence is GHVDHGKT. 488–495 contributes to the GTP binding site; the sequence is GHVDHGKT. Positions 513 to 517 are G2; that stretch reads GITQR. The G3 stretch occupies residues 538–541; sequence DTPG. GTP-binding positions include 538 to 542 and 592 to 595; these read DTPGH and NKID. Residues 592-595 are G4; the sequence is NKID. The segment at 628–630 is G5; sequence SAK.

This sequence belongs to the TRAFAC class translation factor GTPase superfamily. Classic translation factor GTPase family. IF-2 subfamily.

It is found in the cytoplasm. In terms of biological role, one of the essential components for the initiation of protein synthesis. Protects formylmethionyl-tRNA from spontaneous hydrolysis and promotes its binding to the 30S ribosomal subunits. Also involved in the hydrolysis of GTP during the formation of the 70S ribosomal complex. The chain is Translation initiation factor IF-2 from Bifidobacterium longum subsp. infantis (strain ATCC 15697 / DSM 20088 / JCM 1222 / NCTC 11817 / S12).